Consider the following 151-residue polypeptide: Small ribosomal subunit protein uS15 (151 aa).

Basic residues predominate over residues 1–16 (MPHRSRDKKGRSRSVR). Positions 1-20 (MPHRSRDKKGRSRSVRPAHP) are disordered.

The protein belongs to the universal ribosomal protein uS15 family. As to quaternary structure, part of the 30S ribosomal subunit.

The chain is Small ribosomal subunit protein uS15 from Pyrobaculum aerophilum (strain ATCC 51768 / DSM 7523 / JCM 9630 / CIP 104966 / NBRC 100827 / IM2).